Reading from the N-terminus, the 160-residue chain is Archaemetzincin (160 aa).

Histidine 117 is a Zn(2+) binding site. The Proton acceptor role is filled by glutamate 118. Positions 121, 127, 128, 132, 151, and 154 each coordinate Zn(2+).

This sequence belongs to the peptidase M54 family. Monomer. It depends on Zn(2+) as a cofactor.

Probable zinc metalloprotease whose natural substrate is unknown. In Archaeoglobus fulgidus (strain ATCC 49558 / DSM 4304 / JCM 9628 / NBRC 100126 / VC-16), this protein is Archaemetzincin.